We begin with the raw amino-acid sequence, 855 residues long: Suppressor of tumorigenicity 14 protein homolog (855 aa).

Topologically, residues 1 to 55 are cytoplasmic; sequence MGSNRGRKAGGGSQDFGAGLKYNSRLENMNGFEEGVEFLPANNAKKVEKRGPRRW. A Phosphoserine modification is found at serine 13. Residues 56–76 form a helical; Signal-anchor for type II membrane protein membrane-spanning segment; that stretch reads VVLVAVLFSFLLLSLMAGLLV. The Extracellular portion of the chain corresponds to 77-855; sequence WHFHYRNVRV…RDWIKEHTGV (779 aa). The 118-residue stretch at 86–203 folds into the SEA domain; the sequence is VQKVFNGHLR…TSVVAFPIDP (118 aa). Asparagine 107 carries N-linked (GlcNAc...) asparagine glycosylation. Cysteines 214 and 244 form a disulfide. CUB domains follow at residues 214–331 and 340–444; these read CSFA…EATF and CGGF…LAEY. Residues asparagine 302 and asparagine 365 are each glycosylated (N-linked (GlcNAc...) asparagine). 2 cysteine pairs are disulfide-bonded: cysteine 340/cysteine 366 and cysteine 397/cysteine 410. Residue asparagine 421 is glycosylated (N-linked (GlcNAc...) asparagine). 4 consecutive LDL-receptor class A domains span residues 451–488, 489–522, 523–561, and 565–604; these read DPCP…YCRC, NATH…DEEG, CSCP…SCDS, and VSCT…NCDC. Intrachain disulfides connect cysteine 453–cysteine 464, cysteine 459–cysteine 477, cysteine 471–cysteine 486, cysteine 488–cysteine 501, cysteine 496–cysteine 514, cysteine 508–cysteine 523, cysteine 525–cysteine 537, cysteine 532–cysteine 550, cysteine 544–cysteine 559, cysteine 567–cysteine 579, cysteine 574–cysteine 593, cysteine 587–cysteine 602, and cysteine 641–cysteine 657. Asparagine 489 carries an N-linked (GlcNAc...) asparagine glycan. Positions 615–854 constitute a Peptidase S1 domain; sequence VVGGTNADEG…VRDWIKEHTG (240 aa). Catalysis depends on charge relay system residues histidine 656 and aspartate 711. Asparagine 772 carries an N-linked (GlcNAc...) asparagine glycan. Intrachain disulfides connect cysteine 776–cysteine 790 and cysteine 801–cysteine 830. Residue serine 805 is the Charge relay system of the active site.

It belongs to the peptidase S1 family. Interacts with CDCP1. May interact with TMEFF1. As to expression, highly expressed in intestine, kidney, lung, and thymus. Not expressed in skeletal muscle, liver, heart, testis and brain.

It is found in the membrane. It carries out the reaction Cleaves various synthetic substrates with Arg or Lys at the P1 position and prefers small side-chain amino acids, such as Ala and Gly, at the P2 position.. Exhibits trypsin-like activity as defined by cleavage of synthetic substrates with Arg or Lys as the P1 site. Involved in the terminal differentiation of keratinocytes through prostasin (PRSS8) activation and filaggrin (FLG) processing. Proteolytically cleaves and therefore activates TMPRSS13. The chain is Suppressor of tumorigenicity 14 protein homolog (St14) from Mus musculus (Mouse).